We begin with the raw amino-acid sequence, 640 residues long: MTYSLLPHIHSPQDLHALSLDKLPVLCDEIRNKIIESLSLTGGHLASNLGGVELTVALHYVFSSPDDQFIFDVGHQSYVHKLLTGRNTEAFSNIRHDNGLSGFTTPQESNHDIFFSGHAGNALSLALGLAKGSSNSSSHILPILGDAAFSCGLTLEALNNIPADLSKFIIVLNDNQMSISENVGNIPQGISHWMYPQKISKLSQKIHSWIQNLPSFLHKKKTLSHKVDIALKSLSHPLFEQFGLHYVGPIDGHNVKKLVQALQMIKDQPQPILFHVCTVKGNGLAEAERDPIRYHGVKAHFQNTSLKKTSGNVELQTPISFPQHAGNILCRLGKKYPQLQVVTPAMSLGSCLEDFRKQFPDRFTDVGIAEGHAVTFSAGIARSGTPVCCSIYSTFLHRAMDNVFHDVCMQELPVIFAIDRAGLAFHDGRSHHGIYDLGFLCSMPNMVICQPRNALVLERLFFSSLLWKSPCAIRYPNIPANEKASNSFFPFSPILPGEAEILCQGDDLLLIALGHMCNTALTVKEHLLDYGISTTVVDPIFIKPLDRKLLQSLLTHHSKVIILEEHSIHGGLGSEFLLFLNQHNIKADVLSLGVPDMFIPHGNPETILNLIGLTSDHITQRILSHFKFFTPIPIERFFKA.

Thiamine diphosphate-binding positions include histidine 75 and 117–119; that span reads GHA. A Mg(2+)-binding site is contributed by aspartate 146. Residues 147 to 148, asparagine 175, and glutamate 370 each bind thiamine diphosphate; that span reads AA. Asparagine 175 serves as a coordination point for Mg(2+).

This sequence belongs to the transketolase family. DXPS subfamily. In terms of assembly, homodimer. It depends on Mg(2+) as a cofactor. Thiamine diphosphate serves as cofactor.

It carries out the reaction D-glyceraldehyde 3-phosphate + pyruvate + H(+) = 1-deoxy-D-xylulose 5-phosphate + CO2. It functions in the pathway metabolic intermediate biosynthesis; 1-deoxy-D-xylulose 5-phosphate biosynthesis; 1-deoxy-D-xylulose 5-phosphate from D-glyceraldehyde 3-phosphate and pyruvate: step 1/1. In terms of biological role, catalyzes the acyloin condensation reaction between C atoms 2 and 3 of pyruvate and glyceraldehyde 3-phosphate to yield 1-deoxy-D-xylulose-5-phosphate (DXP). In Chlamydia trachomatis serovar A (strain ATCC VR-571B / DSM 19440 / HAR-13), this protein is 1-deoxy-D-xylulose-5-phosphate synthase.